The chain runs to 74 residues: Translation initiation factor IF-1 (74 aa).

One can recognise an S1-like domain in the interval 1–72 (MAKQDAIEME…TKGRITYRLR (72 aa)).

The protein belongs to the IF-1 family. As to quaternary structure, component of the 30S ribosomal translation pre-initiation complex which assembles on the 30S ribosome in the order IF-2 and IF-3, IF-1 and N-formylmethionyl-tRNA(fMet); mRNA recruitment can occur at any time during PIC assembly.

It localises to the cytoplasm. Its function is as follows. One of the essential components for the initiation of protein synthesis. Stabilizes the binding of IF-2 and IF-3 on the 30S subunit to which N-formylmethionyl-tRNA(fMet) subsequently binds. Helps modulate mRNA selection, yielding the 30S pre-initiation complex (PIC). Upon addition of the 50S ribosomal subunit IF-1, IF-2 and IF-3 are released leaving the mature 70S translation initiation complex. This is Translation initiation factor IF-1 from Acaryochloris marina (strain MBIC 11017).